Reading from the N-terminus, the 739-residue chain is Phosphoribosylformylglycinamidine synthase subunit PurL (739 aa).

The active site involves His53. Tyr56 and Lys95 together coordinate ATP. Glu97 contributes to the Mg(2+) binding site. Substrate contacts are provided by residues Ser98–His101 and Arg120. Residue His99 is the Proton acceptor of the active site. Position 121 (Asp121) interacts with Mg(2+). Gln244 lines the substrate pocket. Residue Asp274 participates in Mg(2+) binding. Position 318-320 (Glu318–Gln320) interacts with substrate. ATP is bound by residues Asp501 and Gly538. Asn539 contributes to the Mg(2+) binding site. Residue Ser541 coordinates substrate.

This sequence belongs to the FGAMS family. In terms of assembly, monomer. Part of the FGAM synthase complex composed of 1 PurL, 1 PurQ and 2 PurS subunits.

It is found in the cytoplasm. The catalysed reaction is N(2)-formyl-N(1)-(5-phospho-beta-D-ribosyl)glycinamide + L-glutamine + ATP + H2O = 2-formamido-N(1)-(5-O-phospho-beta-D-ribosyl)acetamidine + L-glutamate + ADP + phosphate + H(+). Its pathway is purine metabolism; IMP biosynthesis via de novo pathway; 5-amino-1-(5-phospho-D-ribosyl)imidazole from N(2)-formyl-N(1)-(5-phospho-D-ribosyl)glycinamide: step 1/2. Part of the phosphoribosylformylglycinamidine synthase complex involved in the purines biosynthetic pathway. Catalyzes the ATP-dependent conversion of formylglycinamide ribonucleotide (FGAR) and glutamine to yield formylglycinamidine ribonucleotide (FGAM) and glutamate. The FGAM synthase complex is composed of three subunits. PurQ produces an ammonia molecule by converting glutamine to glutamate. PurL transfers the ammonia molecule to FGAR to form FGAM in an ATP-dependent manner. PurS interacts with PurQ and PurL and is thought to assist in the transfer of the ammonia molecule from PurQ to PurL. The protein is Phosphoribosylformylglycinamidine synthase subunit PurL of Listeria monocytogenes serotype 4b (strain F2365).